The sequence spans 544 residues: Fructose dehydrogenase large subunit (544 aa).

Position 14-30 (14-30 (GAGICGSLLAHKLVRNG)) interacts with FAD. His-478 serves as the catalytic Proton acceptor.

Belongs to the GMC oxidoreductase family. In terms of assembly, heterotrimer composed of FdhL, FdhS and FdhC. FAD is required as a cofactor.

The protein resides in the cell membrane. It carries out the reaction keto-D-fructose + a ubiquinone = 5-dehydro-D-fructose + a ubiquinol. Catalytic subunit of fructose dehydrogenase, an enzyme that catalyzes the oxidation of D-fructose to produce 5-keto-D-fructose. This chain is Fructose dehydrogenase large subunit (fdhL), found in Gluconobacter japonicus.